The sequence spans 333 residues: NADH-quinone oxidoreductase subunit H (333 aa).

The next 8 membrane-spanning stretches (helical) occupy residues 15 to 35 (FFIF…FVTY), 88 to 108 (FILA…VIPF), 117 to 137 (IGVG…GVVT), 159 to 179 (ISYE…AGSL), 191 to 211 (VWYI…AVAE), 239 to 259 (WAFF…LITV), 274 to 296 (IPGA…WFRV), and 313 to 333 (VLLP…ELFF).

The protein belongs to the complex I subunit 1 family. NDH-1 is composed of 14 different subunits. Subunits NuoA, H, J, K, L, M, N constitute the membrane sector of the complex.

The protein resides in the cell membrane. The catalysed reaction is a quinone + NADH + 5 H(+)(in) = a quinol + NAD(+) + 4 H(+)(out). Its function is as follows. NDH-1 shuttles electrons from NADH, via FMN and iron-sulfur (Fe-S) centers, to quinones in the respiratory chain. The immediate electron acceptor for the enzyme in this species is believed to be ubiquinone. Couples the redox reaction to proton translocation (for every two electrons transferred, four hydrogen ions are translocated across the cytoplasmic membrane), and thus conserves the redox energy in a proton gradient. This subunit may bind ubiquinone. The protein is NADH-quinone oxidoreductase subunit H of Bacillus thuringiensis subsp. konkukian (strain 97-27).